The chain runs to 342 residues: Endoplasmic reticulum junction formation protein lunapark-1 (342 aa).

Over Met1–Thr39 the chain is Cytoplasmic. A coiled-coil region spans residues Thr13–Ser34. A helical membrane pass occupies residues Leu40–Leu60. Over Arg61 to Thr68 the chain is Lumenal. The chain crosses the membrane as a helical span at residues Tyr69–Ile89. Residues Asn90–His342 are Cytoplasmic-facing. Positions Gln102–Lys136 form a coiled coil. The segment at Ala161–Met191 is disordered. Residues Pro179–Met191 show a composition bias toward polar residues. The C4-type; plays a role in ER morphology zinc-finger motif lies at Cys236–Cys261. The tract at residues Arg278–His342 is disordered. Residues Ser295 to Glu321 show a composition bias toward polar residues. The span at Lys322–His342 shows a compositional bias: basic and acidic residues.

The protein belongs to the lunapark family. Expressed in cell bodies along the ventral cord around the pharynx and the tail both in larvae and adults. Also expressed in muscles and hypodermal cells.

Its subcellular location is the endoplasmic reticulum membrane. Its function is as follows. Plays a role in tubular endoplasmic reticulum network formation and maintenance. May be involved in central nervous system development. Has a presynaptic role in neurotransmission. Likely to operate in synaptogenesis by regulating vesicular transport or localization. Required for correct localization of rab-3 and snb-1. The protein is Endoplasmic reticulum junction formation protein lunapark-1 (lnp-1) of Caenorhabditis elegans.